The sequence spans 431 residues: Protein cereblon (431 aa).

The disordered stretch occupies residues 1–36 (MGNQLQLLPENEEEEEDDMETEDRDGEDVEKPSIIN). Residues 10 to 28 (ENEEEEEDDMETEDRDGED) are compositionally biased toward acidic residues. One can recognise a Lon N-terminal domain in the interval 69–309 (LPVLPHVALI…CELDIMDRCT (241 aa)). In terms of domain architecture, CULT spans 308-416 (CTSLCCKQCQ…LTRSALLPTI (109 aa)). C313 and C316 together coordinate Zn(2+). Residues H368, W370, and W376 each coordinate (S)-thalidomide. The Zn(2+) site is built by C381 and C384.

The protein belongs to the CRBN family. In terms of assembly, component of a DCX (DDB1-CUL4-X-box) protein ligase complex. Highly expressed in brain, head, vasculature otic vesicles and developing pectoral fins.

Its subcellular location is the cytoplasm. The protein resides in the nucleus. The protein operates within protein modification; protein ubiquitination. In terms of biological role, substrate recognition component of a DCX (DDB1-CUL4-X-box) E3 protein ligase complex that mediates the ubiquitination and subsequent proteasomal degradation of target proteins, such as MEIS2. Normal degradation of key regulatory proteins is required for normal limb outgrowth and expression of the fibroblast growth factor FGF8. Maintains presynaptic glutamate release and consequently cognitive functions, such as memory and learning, by negatively regulating large-conductance calcium-activated potassium (BK) channels in excitatory neurons. Likely to function by regulating the assembly and neuronal surface expression of BK channels via its interaction with KCNT1. May also be involved in regulating anxiety-like behaviors via a BK channel-independent mechanism. The chain is Protein cereblon (crbn) from Danio rerio (Zebrafish).